The chain runs to 356 residues: Surface presentation of antigens protein SpaS (356 aa).

The next 5 helical transmembrane spans lie at 29–49 (LIIACLTLGGIAYLVSYGSFN), 72–92 (LAVFGIGLKYLIPFMLLCLVC), 132–152 (VKDTVKTLLYLSSFVVAAIIC), 179–199 (LLALVLTCLACALIVLLLDAI), and 261–281 (HITIGIYFKPELMPIPMISVY).

This sequence belongs to the type III secretion exporter family.

The protein resides in the cell inner membrane. Functionally, involved in a secretory pathway responsible for the surface presentation of determinants needed for the entry of Salmonella species into mammalian cells. This is Surface presentation of antigens protein SpaS (spaS) from Salmonella typhimurium (strain LT2 / SGSC1412 / ATCC 700720).